Consider the following 169-residue polypeptide: Cell division protein B3 (169 aa).

In terms of biological role, part of a cell division machinery. May fulfill a coordination function between the Cdv proteins during cell division. In Sulfolobus acidocaldarius (strain ATCC 33909 / DSM 639 / JCM 8929 / NBRC 15157 / NCIMB 11770), this protein is Cell division protein B3.